The sequence spans 565 residues: Putative pentatricopeptide repeat-containing protein At3g05240 (565 aa).

PPR repeat units lie at residues 37 to 70 (NVIPLSRLIDFCTTCPETMNLSYARSVFESIDCP), 71 to 105 (SVYIWNSMIRGYSNSPNPDKALIFYQEMLRKGYSP), 106 to 140 (DYFTFPYVLKACSGLRDIQFGSCVHGFVVKTGFEV), 141 to 171 (NMYVSTCLLHMYMCCGEVNYGLRVFEDIPQW), 172 to 206 (NVVAWGSLISGFVNNNRFSDAIEAFREMQSNGVKA), 207 to 241 (NETIMVDLLVACGRCKDIVTGKWFHGFLQGLGFDP), 250 to 280 (NVILATSLIDMYAKCGDLRTARYLFDGMPER), 281 to 315 (TLVSWNSIITGYSQNGDAEEALCMFLDMLDLGIAP), 316 to 350 (DKVTFLSVIRASMIQGCSQLGQSIHAYVSKTGFVK), 351 to 381 (DAAIVCALVNMYAKTGDAESAKKAFEDLEKK), 382 to 416 (DTIAWTVVIIGLASHGHGNEALSIFQRMQEKGNAT), 418 to 448 (DGITYLGVLYACSHIGLVEEGQRYFAEMRDL), and 454 to 484 (TVEHYGCMVDILSRAGRFEEAERLVKTMPVK). Residues 489 to 564 (IWGALLNGCD…VLGHSSVETM (76 aa)) form a type E motif region.

Belongs to the PPR family. PCMP-E subfamily.

The protein is Putative pentatricopeptide repeat-containing protein At3g05240 (PCMP-E82) of Arabidopsis thaliana (Mouse-ear cress).